The following is a 217-amino-acid chain: Large ribosomal subunit protein uL3 (217 aa).

Positions 134–154 (DATHGNSLSHRAPGSIGQCQT) are disordered. Gln-153 bears the N5-methylglutamine mark.

Belongs to the universal ribosomal protein uL3 family. Part of the 50S ribosomal subunit. Forms a cluster with proteins L14 and L19. Post-translationally, methylated by PrmB.

Functionally, one of the primary rRNA binding proteins, it binds directly near the 3'-end of the 23S rRNA, where it nucleates assembly of the 50S subunit. The chain is Large ribosomal subunit protein uL3 from Coxiella burnetii (strain Dugway 5J108-111).